Here is a 102-residue protein sequence, read N- to C-terminus: MIVPLLHVLILAGILFVLGLTCVLVWRSNIIMMLIGIEIMLNAAMLAFVGGANRWGAADGQVFALMIIAMTSAEVSLALALVVYLHRRKKTVNADEFSDMKG.

The next 3 helical transmembrane spans lie at 5-25, 30-50, and 62-82; these read LLHV…CVLV, IIMM…AFVG, and VFAL…LALV.

It belongs to the complex I subunit 4L family. In terms of assembly, NDH-1 is composed of 14 different subunits. Subunits NuoA, H, J, K, L, M, N constitute the membrane sector of the complex.

Its subcellular location is the cell inner membrane. It carries out the reaction a quinone + NADH + 5 H(+)(in) = a quinol + NAD(+) + 4 H(+)(out). Functionally, NDH-1 shuttles electrons from NADH, via FMN and iron-sulfur (Fe-S) centers, to quinones in the respiratory chain. The immediate electron acceptor for the enzyme in this species is believed to be ubiquinone. Couples the redox reaction to proton translocation (for every two electrons transferred, four hydrogen ions are translocated across the cytoplasmic membrane), and thus conserves the redox energy in a proton gradient. In Geotalea uraniireducens (strain Rf4) (Geobacter uraniireducens), this protein is NADH-quinone oxidoreductase subunit K 1.